Consider the following 35-residue polypeptide: Photosystem II reaction center protein T (35 aa).

The helical transmembrane segment at 3 to 23 (ALVYTFLLVSTLGIIFFAIFF) threads the bilayer.

This sequence belongs to the PsbT family. As to quaternary structure, PSII is composed of 1 copy each of membrane proteins PsbA, PsbB, PsbC, PsbD, PsbE, PsbF, PsbH, PsbI, PsbJ, PsbK, PsbL, PsbM, PsbT, PsbY, PsbZ, Psb30/Ycf12, at least 3 peripheral proteins of the oxygen-evolving complex and a large number of cofactors. It forms dimeric complexes.

It localises to the plastid. The protein resides in the chloroplast thylakoid membrane. Its function is as follows. Found at the monomer-monomer interface of the photosystem II (PS II) dimer, plays a role in assembly and dimerization of PSII. PSII is a light-driven water plastoquinone oxidoreductase, using light energy to abstract electrons from H(2)O, generating a proton gradient subsequently used for ATP formation. The chain is Photosystem II reaction center protein T from Schisandra chinensis (Chinese magnolia vine).